We begin with the raw amino-acid sequence, 329 residues long: Galactosylgalactosylxylosylprotein 3-beta-glucuronosyltransferase 2 (329 aa).

The Cytoplasmic portion of the chain corresponds to 1–2; sequence MK. A helical; Signal-anchor for type II membrane protein transmembrane segment spans residues 3 to 23; that stretch reads SALFSRFFILLPWILIVIIML. Over 24–329 the chain is Lumenal; that stretch reads DVDTRRPAPP…YRLDTVKIEV (306 aa). The segment at 45 to 87 is disordered; it reads VGRGGARLPPRRGGPDSGPGRGWEKRNESRPHARPRPEPPLPT. The span at 66 to 81 shows a compositional bias: basic and acidic residues; the sequence is GWEKRNESRPHARPRP. An N-linked (GlcNAc...) asparagine glycan is attached at Asn71. UDP-alpha-D-glucuronate contacts are provided by residues 93 to 95, Asp124, Arg161, Arg166, and 191 to 193; these read PTY and DDD. Asp193 serves as a coordination point for Mn(2+). The segment at 240–249 is interaction with galactose moiety of substrate glycoprotein; sequence WRADRPFAID. The active-site Proton donor/acceptor is the Glu279. N-linked (GlcNAc...) asparagine glycosylation occurs at Asn298. Residue 306 to 308 coordinates UDP-alpha-D-glucuronate; it reads HTR.

It belongs to the glycosyltransferase 43 family. In terms of assembly, homodimer. Requires Mn(2+) as cofactor.

Its subcellular location is the golgi apparatus membrane. The catalysed reaction is 3-O-(beta-D-galactosyl-(1-&gt;3)-beta-D-galactosyl-(1-&gt;4)-beta-D-xylosyl)-L-seryl-[protein] + UDP-alpha-D-glucuronate = 3-O-(beta-D-GlcA-(1-&gt;3)-beta-D-Gal-(1-&gt;3)-beta-D-Gal-(1-&gt;4)-beta-D-Xyl)-L-seryl-[protein] + UDP + H(+). It functions in the pathway protein modification; protein glycosylation. In terms of biological role, involved in the biosynthesis of L2/HNK-1 carbohydrate epitope on both glycolipids and glycoproteins. This chain is Galactosylgalactosylxylosylprotein 3-beta-glucuronosyltransferase 2 (B3GAT2), found in Canis lupus familiaris (Dog).